An 884-amino-acid polypeptide reads, in one-letter code: Probable disease resistance protein At1g12290 (884 aa).

A coiled-coil region spans residues 26 to 66; sequence LYYIQNIKENLTSLEEAMEDLKALRDDLLRKVQTAEEGGLQ. Positions 139–443 constitute an NB-ARC domain; it reads AHPATRAVGE…CEGFIDGDEN (305 aa). 182 to 189 is a binding site for ATP; it reads GMGGVGKT. LRR repeat units follow at residues 519 to 540, 541 to 563, 566 to 588, 590 to 612, 613 to 635, and 644 to 664; these read VVSRMSLVNNRIKEIHGSPECP, KLTTLFLQDNRHLVNISGEFFRS, RLVVLDLSWNVNLSGLPDQISEL, SLRYLDLSYSSIGRLPVGLLKLK, KLMHLNLESMLCLESVSGIDHLS, and NLRMWLTISLLEELERLENLE.

The protein belongs to the disease resistance NB-LRR family.

Functionally, probable disease resistance protein. The sequence is that of Probable disease resistance protein At1g12290 from Arabidopsis thaliana (Mouse-ear cress).